The sequence spans 276 residues: Protein SCO1 homolog 2, mitochondrial (276 aa).

A mitochondrion-targeting transit peptide spans 1–14; that stretch reads MLPCRRLVLSCKNQ. The helical transmembrane segment at 66–82 threads the bilayer; the sequence is YAVPAILLGFAGFVGFL. The Thioredoxin domain occupies 110–273; sequence VKGPIIGGPF…SQELLKEVAS (164 aa).

Belongs to the SCO1/2 family. As to expression, expressed in the whole plant with highest expression in imbibed seeds and embryos, and the root hair zone.

The protein resides in the mitochondrion inner membrane. Thought to play a role in cellular copper homeostasis, mitochondrial redox signaling or insertion of copper into the active site of COX. Participates in copper and redox homeostasis. This is Protein SCO1 homolog 2, mitochondrial (HCC2) from Arabidopsis thaliana (Mouse-ear cress).